Reading from the N-terminus, the 571-residue chain is Glutamate--tRNA ligase (571 aa).

Positions 38–48 (PSPTGFMHIGG) match the 'HIGH' region motif. Residues 316-320 (KLSKR) carry the 'KMSKS' region motif. Position 319 (K319) interacts with ATP.

Belongs to the class-I aminoacyl-tRNA synthetase family. Glutamate--tRNA ligase type 1 subfamily. In terms of assembly, monomer.

The protein resides in the cytoplasm. It carries out the reaction tRNA(Glu) + L-glutamate + ATP = L-glutamyl-tRNA(Glu) + AMP + diphosphate. Catalyzes the attachment of glutamate to tRNA(Glu) in a two-step reaction: glutamate is first activated by ATP to form Glu-AMP and then transferred to the acceptor end of tRNA(Glu). In Sorangium cellulosum (strain So ce56) (Polyangium cellulosum (strain So ce56)), this protein is Glutamate--tRNA ligase.